A 191-amino-acid chain; its full sequence is MGAVALDHLPEPDRLEVAFAGRSNVGKSSLINALTNQKGLARASGEPGRTRELNFFNVEGGDLRIVDLPGYGYAKAPKPVVEKWTRLTKAFLRGRVNLKRVYLLIDSRHGLKDVDLKIMDVFDEAAVSYQVVLTKTDKIKPPAVKRLIGETGEKIARRPAAFPRVIATSSAKQDGVDQLRAEIVALLPDMG.

The EngB-type G domain maps to 13–189 (DRLEVAFAGR…RAEIVALLPD (177 aa)). GTP is bound by residues 21-28 (GRSNVGKS), 48-52 (GRTRE), 67-70 (DLPG), 134-137 (TKTD), and 168-170 (TSS). Mg(2+)-binding residues include Ser28 and Thr50.

Belongs to the TRAFAC class TrmE-Era-EngA-EngB-Septin-like GTPase superfamily. EngB GTPase family. Mg(2+) serves as cofactor.

Its function is as follows. Necessary for normal cell division and for the maintenance of normal septation. This chain is Probable GTP-binding protein EngB, found in Maricaulis maris (strain MCS10) (Caulobacter maris).